Here is a 316-residue protein sequence, read N- to C-terminus: Olfactory receptor class A-like protein 1 (316 aa).

The Extracellular segment spans residues Met-1–Lys-8. The helical transmembrane segment at Gly-9–Ala-29 threads the bilayer. The Cytoplasmic portion of the chain corresponds to Tyr-30 to Arg-39. Residues Leu-40–Thr-60 form a helical membrane-spanning segment. Residues Arg-61–Cys-97 are Extracellular-facing. Cys-81 and Cys-169 are disulfide-bonded. A helical membrane pass occupies residues Ile-98 to Leu-118. Over Ser-119–Thr-132 the chain is Cytoplasmic. A helical transmembrane segment spans residues Phe-133–Ala-153. At Pro-154 to Ser-187 the chain is on the extracellular side. Asn-156 and Asn-176 each carry an N-linked (GlcNAc...) asparagine glycan. The helical transmembrane segment at Val-188–Leu-208 threads the bilayer. Topologically, residues His-209–Thr-233 are cytoplasmic. A helical membrane pass occupies residues Val-234–Tyr-254. Over Met-255–Val-264 the chain is Extracellular. The chain crosses the membrane as a helical span at residues Val-265–Ile-285. Residues Ser-286–Asn-316 are Cytoplasmic-facing.

It belongs to the G-protein coupled receptor 1 family. In terms of tissue distribution, highly expressed in the olfactory rosette where it localizes to a subset of olfactory sensory neurons, mainly in the apical region of the neuroepithelium. Not detected in other tissues tested.

It is found in the cell membrane. Probable pheromone receptor. Shows high specificity for 4-hydroxyphenylacetic acid. Activation of the receptor stimulates intracellular calcium release. The chain is Olfactory receptor class A-like protein 1 from Danio rerio (Zebrafish).